Reading from the N-terminus, the 220-residue chain is Adenylate kinase (220 aa).

10–15 (GAGKGT) is an ATP binding site. Residues 30 to 59 (STGDLFRANISQQTELGKLAKSYMDEGNLV) form an NMP region. AMP is bound by residues Thr31, Arg36, 57–59 (NLV), 85–88 (GFPR), and Gln92. The tract at residues 126 to 164 (GRRICRNDSAHVFHVSYKPPKQEGVCDVCGGELYQRDDD) is LID. ATP is bound by residues Arg127 and 137-138 (VF). AMP-binding residues include Arg161 and Arg172. Gly200 is an ATP binding site.

This sequence belongs to the adenylate kinase family. Monomer.

It is found in the cytoplasm. The catalysed reaction is AMP + ATP = 2 ADP. It participates in purine metabolism; AMP biosynthesis via salvage pathway; AMP from ADP: step 1/1. Catalyzes the reversible transfer of the terminal phosphate group between ATP and AMP. Plays an important role in cellular energy homeostasis and in adenine nucleotide metabolism. The chain is Adenylate kinase from Streptomyces avermitilis (strain ATCC 31267 / DSM 46492 / JCM 5070 / NBRC 14893 / NCIMB 12804 / NRRL 8165 / MA-4680).